The chain runs to 151 residues: Arginine repressor (151 aa).

The protein belongs to the ArgR family.

It is found in the cytoplasm. It functions in the pathway amino-acid biosynthesis; L-arginine biosynthesis [regulation]. Regulates arginine biosynthesis genes. The sequence is that of Arginine repressor from Heliobacterium modesticaldum (strain ATCC 51547 / Ice1).